The sequence spans 183 residues: Large ribosomal subunit protein uL6 (183 aa).

It belongs to the universal ribosomal protein uL6 family. In terms of assembly, part of the 50S ribosomal subunit.

Its function is as follows. This protein binds to the 23S rRNA, and is important in its secondary structure. It is located near the subunit interface in the base of the L7/L12 stalk, and near the tRNA binding site of the peptidyltransferase center. The chain is Large ribosomal subunit protein uL6 from Mycoplasmoides gallisepticum (strain R(low / passage 15 / clone 2)) (Mycoplasma gallisepticum).